Reading from the N-terminus, the 109-residue chain is Small ribosomal subunit protein uS10 (109 aa).

Belongs to the universal ribosomal protein uS10 family. In terms of assembly, part of the 30S ribosomal subunit.

In terms of biological role, involved in the binding of tRNA to the ribosomes. This is Small ribosomal subunit protein uS10 from Wolbachia pipientis wMel.